We begin with the raw amino-acid sequence, 313 residues long: ADP-L-glycero-D-manno-heptose-6-epimerase (313 aa).

NADP(+) contacts are provided by residues 10-11, 31-32, lysine 38, arginine 53, 75-79, and asparagine 92; these read MI, DN, and EGACS. The active-site Proton acceptor is the tyrosine 139. An NADP(+)-binding site is contributed by lysine 143. Substrate is bound at residue asparagine 174. NADP(+) contacts are provided by valine 175 and lysine 183. The Proton acceptor role is filled by lysine 183. Substrate contacts are provided by residues serine 185, histidine 192, 206–209, arginine 214, and tyrosine 277; that span reads FEGS.

Belongs to the NAD(P)-dependent epimerase/dehydratase family. HldD subfamily. Homopentamer. NADP(+) is required as a cofactor.

The catalysed reaction is ADP-D-glycero-beta-D-manno-heptose = ADP-L-glycero-beta-D-manno-heptose. Its pathway is nucleotide-sugar biosynthesis; ADP-L-glycero-beta-D-manno-heptose biosynthesis; ADP-L-glycero-beta-D-manno-heptose from D-glycero-beta-D-manno-heptose 7-phosphate: step 4/4. It functions in the pathway bacterial outer membrane biogenesis; LPS core biosynthesis. Functionally, catalyzes the interconversion between ADP-D-glycero-beta-D-manno-heptose and ADP-L-glycero-beta-D-manno-heptose via an epimerization at carbon 6 of the heptose. This Vibrio parahaemolyticus serotype O3:K6 (strain RIMD 2210633) protein is ADP-L-glycero-D-manno-heptose-6-epimerase.